The primary structure comprises 304 residues: Protease HtpX homolog 1 (304 aa).

Transmembrane regions (helical) follow at residues 17 to 37 (VTLFLLGLLYVGFVAALIALL) and 39 to 59 (SWVLVVVIVALVFGAQYWFSD). Position 140 (His-140) interacts with Zn(2+). Residue Glu-141 is part of the active site. His-144 is a binding site for Zn(2+). 2 helical membrane passes run 151-171 (AVITVASFLGVIAGLIVRFAF) and 186-206 (AVLAVVMGVSAAVYALSFLLI). A Zn(2+)-binding site is contributed by Glu-214.

It belongs to the peptidase M48B family. Zn(2+) serves as cofactor.

Its subcellular location is the cell membrane. In Streptomyces coelicolor (strain ATCC BAA-471 / A3(2) / M145), this protein is Protease HtpX homolog 1.